The chain runs to 238 residues: Small ribosomal subunit protein uS3 (238 aa).

Residues Met39–Arg107 form the KH type-2 domain. Basic and acidic residues predominate over residues Pro212 to Ala222. Residues Pro212–Ala238 are disordered.

The protein belongs to the universal ribosomal protein uS3 family. Part of the 30S ribosomal subunit. Forms a tight complex with proteins S10 and S14.

Binds the lower part of the 30S subunit head. Binds mRNA in the 70S ribosome, positioning it for translation. This Cereibacter sphaeroides (strain ATCC 17025 / ATH 2.4.3) (Rhodobacter sphaeroides) protein is Small ribosomal subunit protein uS3.